We begin with the raw amino-acid sequence, 365 residues long: TD and POZ domain-containing protein 1 (365 aa).

The MATH domain maps to 19 to 149; that stretch reads KFCYKWTISN…EDQLTICCKV (131 aa). In terms of domain architecture, BTB spans 188–250; the sequence is TDCCLLVAGH…EMMGFIYTGK (63 aa).

This sequence belongs to the Tdpoz family.

The sequence is that of TD and POZ domain-containing protein 1 from Mus musculus (Mouse).